Consider the following 396-residue polypeptide: Ornithine aminotransferase (396 aa).

An N6-(pyridoxal phosphate)lysine modification is found at Lys-255.

The protein belongs to the class-III pyridoxal-phosphate-dependent aminotransferase family. OAT subfamily. Pyridoxal 5'-phosphate serves as cofactor.

Its subcellular location is the cytoplasm. The catalysed reaction is a 2-oxocarboxylate + L-ornithine = L-glutamate 5-semialdehyde + an L-alpha-amino acid. It functions in the pathway amino-acid biosynthesis; L-proline biosynthesis; L-glutamate 5-semialdehyde from L-ornithine: step 1/1. Catalyzes the interconversion of ornithine to glutamate semialdehyde. In Bacillus cereus (strain Q1), this protein is Ornithine aminotransferase.